A 147-amino-acid chain; its full sequence is UPF0306 protein YPTB0506 (147 aa).

The protein belongs to the UPF0306 family.

The chain is UPF0306 protein YPTB0506 from Yersinia pseudotuberculosis serotype I (strain IP32953).